We begin with the raw amino-acid sequence, 419 residues long: UPF0242 protein TC_0906 (419 aa).

Belongs to the UPF0242 family.

The polypeptide is UPF0242 protein TC_0906 (Chlamydia muridarum (strain MoPn / Nigg)).